The sequence spans 220 residues: Respiratory supercomplex factor 1, mitochondrial (220 aa).

The 92-residue stretch at 13 to 104 folds into the HIG1 domain; it reads MPSSFDENHE…KDREATKELR (92 aa). The next 2 helical transmembrane spans lie at 41–57 and 76–93; these read LIPL…TQAW and VAAQ…SMYY. The stretch at 91-145 forms a coiled coil; that stretch reads MYYNKDREATKELRKLKEERDSEEKRQKWIRELEIRDEEDKAMRARVMNRRAKAE. The tract at residues 139–220 is disordered; sequence NRRAKAEEAK…RVSAEDDKTN (82 aa). A compositionally biased stretch (low complexity) spans 164–179; it reads SGVLNALGLSGSSSGW.

The protein belongs to the RCF1 family. As to quaternary structure, associates with the respiratory chain complex III/complex IV supercomplex.

The protein resides in the mitochondrion membrane. Functionally, cytochrome c oxidase subunit which plays a role in assembly of respiratory supercomplexes. The chain is Respiratory supercomplex factor 1, mitochondrial (RCF1) from Verticillium alfalfae (strain VaMs.102 / ATCC MYA-4576 / FGSC 10136) (Verticillium wilt of alfalfa).